The chain runs to 575 residues: Chaperonin CPN60-1, mitochondrial (575 aa).

A mitochondrion-targeting transit peptide spans 1–32 (MHRFATGLASKARLARNGANQIASRSNWRRNY).

This sequence belongs to the chaperonin (HSP60) family.

The protein resides in the mitochondrion. Functionally, implicated in mitochondrial protein import and macromolecular assembly. May facilitate the correct folding of imported proteins. May also prevent misfolding and promote the refolding and proper assembly of unfolded polypeptides generated under stress conditions in the mitochondrial matrix. The protein is Chaperonin CPN60-1, mitochondrial (CPN60-1) of Cucurbita maxima (Pumpkin).